We begin with the raw amino-acid sequence, 388 residues long: tRNA-specific 2-thiouridylase MnmA (388 aa).

ATP is bound by residues 26 to 33 (GLSGGVDS) and Leu-52. Cys-113 acts as the Nucleophile in catalysis. Cys-113 and Cys-223 form a disulfide bridge. Gly-138 is a binding site for ATP. Positions 173–175 (KDQ) are interaction with tRNA. Residue Cys-223 is the Cysteine persulfide intermediate of the active site. The segment at 328–329 (RY) is interaction with tRNA.

The protein belongs to the MnmA/TRMU family.

It localises to the cytoplasm. It carries out the reaction S-sulfanyl-L-cysteinyl-[protein] + uridine(34) in tRNA + AH2 + ATP = 2-thiouridine(34) in tRNA + L-cysteinyl-[protein] + A + AMP + diphosphate + H(+). Catalyzes the 2-thiolation of uridine at the wobble position (U34) of tRNA, leading to the formation of s(2)U34. The sequence is that of tRNA-specific 2-thiouridylase MnmA from Prochlorococcus marinus (strain NATL2A).